The sequence spans 101 residues: Urease subunit beta (101 aa).

This sequence belongs to the urease beta subunit family. In terms of assembly, heterotrimer of UreA (gamma), UreB (beta) and UreC (alpha) subunits. Three heterotrimers associate to form the active enzyme.

The protein localises to the cytoplasm. It catalyses the reaction urea + 2 H2O + H(+) = hydrogencarbonate + 2 NH4(+). It participates in nitrogen metabolism; urea degradation; CO(2) and NH(3) from urea (urease route): step 1/1. This chain is Urease subunit beta, found in Pseudomonas aeruginosa (strain LESB58).